The primary structure comprises 207 residues: Cytochrome c biogenesis ATP-binding export protein CcmA (207 aa).

Positions 4 to 207 (LEARELLCER…RISLTQTGAA (204 aa)) constitute an ABC transporter domain. ATP is bound at residue 36 to 43 (GSNGAGKT).

It belongs to the ABC transporter superfamily. CcmA exporter (TC 3.A.1.107) family. The complex is composed of two ATP-binding proteins (CcmA) and two transmembrane proteins (CcmB).

It localises to the cell inner membrane. The enzyme catalyses heme b(in) + ATP + H2O = heme b(out) + ADP + phosphate + H(+). Part of the ABC transporter complex CcmAB involved in the biogenesis of c-type cytochromes; once thought to export heme, this seems not to be the case, but its exact role is uncertain. Responsible for energy coupling to the transport system. This is Cytochrome c biogenesis ATP-binding export protein CcmA from Escherichia coli (strain UTI89 / UPEC).